Reading from the N-terminus, the 281-residue chain is Bifunctional protein FolD 1 (281 aa).

NADP(+)-binding positions include 165–167 (GRS), serine 190, and isoleucine 231.

Belongs to the tetrahydrofolate dehydrogenase/cyclohydrolase family. As to quaternary structure, homodimer.

It catalyses the reaction (6R)-5,10-methylene-5,6,7,8-tetrahydrofolate + NADP(+) = (6R)-5,10-methenyltetrahydrofolate + NADPH. The catalysed reaction is (6R)-5,10-methenyltetrahydrofolate + H2O = (6R)-10-formyltetrahydrofolate + H(+). Its pathway is one-carbon metabolism; tetrahydrofolate interconversion. Its function is as follows. Catalyzes the oxidation of 5,10-methylenetetrahydrofolate to 5,10-methenyltetrahydrofolate and then the hydrolysis of 5,10-methenyltetrahydrofolate to 10-formyltetrahydrofolate. The polypeptide is Bifunctional protein FolD 1 (Desulfitobacterium hafniense (strain Y51)).